Reading from the N-terminus, the 134-residue chain is Protein NrdI (134 aa).

The protein belongs to the NrdI family.

In terms of biological role, probably involved in ribonucleotide reductase function. The sequence is that of Protein NrdI from Rhizobium leguminosarum bv. trifolii (strain WSM2304).